The following is a 378-amino-acid chain: Peptide chain release factor RF2 (378 aa).

The residue at position 253 (Gln-253) is an N5-methylglutamine.

Belongs to the prokaryotic/mitochondrial release factor family. In terms of assembly, interacts with the ribosome. Interacts with ribosomal protein L11. Recruited to stalled E.coli ribosomes by E.coli ArfA.

It is found in the cytoplasm. Peptide chain release factor 2 directs the termination of translation in response to the peptide chain termination codons UGA and UAA. In endogenous ribosomes interacts with P-site tRNA and 23S rRNA. In the presence of truncated mRNA in the 70S ribosome, ArfA and RF2 interact such that the GGQ peptide hydrolysis motif of RF2 rises into the peptidyl-transferase center and releases the ribosome. Recruited to stalled E.coli 70S ribosomes by E.coli ArfA, but cannot be functionally accomodated in the peptidyl-transferase center. Note T.thermophilus probably does not encode arfA. The protein is Peptide chain release factor RF2 (prfB) of Thermus thermophilus (strain ATCC 27634 / DSM 579 / HB8).